Consider the following 256-residue polypeptide: L-erythrulose-1-phosphate isomerase (256 aa).

The Electrophile role is filled by histidine 96. Glutamate 169 functions as the Proton acceptor in the catalytic mechanism. Residues glycine 175 and serine 212 each contribute to the substrate site.

Belongs to the triosephosphate isomerase family. Homodimer.

The protein resides in the cytoplasm. The enzyme catalyses L-erythrulose 1-phosphate = D-erythrulose 4-phosphate. Its pathway is carbohydrate metabolism; erythritol degradation. In terms of biological role, catalyzes the isomerization of D-erythrulose-4P to L-erythrulose-1P. Involved in the degradation pathway of erythritol, that allows B.abortus to grow on this compound as the sole carbon source. This Brucella abortus (strain 2308) protein is L-erythrulose-1-phosphate isomerase.